The sequence spans 975 residues: Glycine dehydrogenase (decarboxylating) (975 aa).

Lys-723 is subject to N6-(pyridoxal phosphate)lysine.

It belongs to the GcvP family. In terms of assembly, the glycine cleavage system is composed of four proteins: P, T, L and H. The cofactor is pyridoxal 5'-phosphate.

It carries out the reaction N(6)-[(R)-lipoyl]-L-lysyl-[glycine-cleavage complex H protein] + glycine + H(+) = N(6)-[(R)-S(8)-aminomethyldihydrolipoyl]-L-lysyl-[glycine-cleavage complex H protein] + CO2. Functionally, the glycine cleavage system catalyzes the degradation of glycine. The P protein binds the alpha-amino group of glycine through its pyridoxal phosphate cofactor; CO(2) is released and the remaining methylamine moiety is then transferred to the lipoamide cofactor of the H protein. The protein is Glycine dehydrogenase (decarboxylating) of Burkholderia multivorans (strain ATCC 17616 / 249).